We begin with the raw amino-acid sequence, 544 residues long: NADP-dependent malic enzyme (544 aa).

Residues 1–22 (MQNKPSFILRNPSANKGTGFNN) form a disordered region. Over residues 12–21 (PSANKGTGFN) the composition is skewed to polar residues. The Proton donor role is filled by Tyr92. Arg145 contacts NAD(+). Catalysis depends on Lys163, which acts as the Proton acceptor. Residues Glu234, Asp235, and Asp258 each coordinate a divalent metal cation. Position 258 (Asp258) interacts with NAD(+). NADP(+) is bound at residue 287–303 (VFLGAGSAGIGVADCIM). Asn400 is a binding site for NAD(+).

The protein belongs to the malic enzymes family. In terms of assembly, homotetramer. Requires Mg(2+) as cofactor. Mn(2+) is required as a cofactor. Expressed in the fruiting body.

The protein localises to the cytoplasm. The enzyme catalyses (S)-malate + NADP(+) = pyruvate + CO2 + NADPH. It catalyses the reaction oxaloacetate + H(+) = pyruvate + CO2. This Dictyostelium discoideum (Social amoeba) protein is NADP-dependent malic enzyme (malA).